The primary structure comprises 858 residues: Elongation factor 2 (858 aa).

The tr-type G domain maps to 17–362 (ANIRNMSVIA…MITIHLPSPV (346 aa)). GTP is bound by residues 26 to 33 (AHVDHGKS), 158 to 161 (NKMD), and 216 to 218 (SGL). Residue histidine 715 is modified to Diphthamide.

This sequence belongs to the TRAFAC class translation factor GTPase superfamily. Classic translation factor GTPase family. EF-G/EF-2 subfamily. Binds to 80S ribosomes. Actively translating ribosomes show mutually exclusive binding of eIF5a (EIF5A or EIF5A2) and EEF2/eEF2. Interacts with serbp1; interaction sequesters eef2/eEF2 at the A-site of the ribosome, thereby blocking the interaction sites of the mRNA-tRNA complex, promoting ribosome stabilization and hibernation. Interacts with habp4; interaction takes place at the A-site of hibernating ribosomes and promotes ribosome stabilization.

The protein localises to the cytoplasm. The protein resides in the nucleus. It catalyses the reaction GTP + H2O = GDP + phosphate + H(+). Catalyzes the GTP-dependent ribosomal translocation step during translation elongation. During this step, the ribosome changes from the pre-translocational (PRE) to the post-translocational (POST) state as the newly formed A-site-bound peptidyl-tRNA and P-site-bound deacylated tRNA move to the P and E sites, respectively. Catalyzes the coordinated movement of the two tRNA molecules, the mRNA and conformational changes in the ribosome. This chain is Elongation factor 2, found in Xenopus laevis (African clawed frog).